The chain runs to 152 residues: Transcriptional regulator MraZ (152 aa).

2 consecutive SpoVT-AbrB domains span residues 5–52 (ATLV…PLPE) and 81–124 (ASEC…DEQT).

Belongs to the MraZ family. As to quaternary structure, forms oligomers.

It is found in the cytoplasm. It localises to the nucleoid. Negatively regulates its own expression and that of the subsequent genes in the proximal part of the division and cell wall (dcw) gene cluster. Acts by binding directly to DNA. May also regulate the expression of genes outside the dcw cluster. This Pectobacterium carotovorum subsp. carotovorum (strain PC1) protein is Transcriptional regulator MraZ.